Reading from the N-terminus, the 392-residue chain is Glutamate 5-kinase (392 aa).

Lysine 17 contributes to the ATP binding site. The substrate site is built by serine 57, aspartate 144, and asparagine 156. Position 176–177 (176–177) interacts with ATP; sequence SD. One can recognise a PUA domain in the interval 282-359; the sequence is AGILSVDAGA…AEIEALLGYA (78 aa). The disordered stretch occupies residues 373-392; that stretch reads TEQTGRKAGKSTKKKDEAHA.

Belongs to the glutamate 5-kinase family.

It is found in the cytoplasm. The catalysed reaction is L-glutamate + ATP = L-glutamyl 5-phosphate + ADP. The protein operates within amino-acid biosynthesis; L-proline biosynthesis; L-glutamate 5-semialdehyde from L-glutamate: step 1/2. In terms of biological role, catalyzes the transfer of a phosphate group to glutamate to form L-glutamate 5-phosphate. This chain is Glutamate 5-kinase, found in Allorhizobium ampelinum (strain ATCC BAA-846 / DSM 112012 / S4) (Agrobacterium vitis (strain S4)).